The primary structure comprises 215 residues: Probable nicotinate-nucleotide adenylyltransferase (215 aa).

This sequence belongs to the NadD family.

The enzyme catalyses nicotinate beta-D-ribonucleotide + ATP + H(+) = deamido-NAD(+) + diphosphate. Its pathway is cofactor biosynthesis; NAD(+) biosynthesis; deamido-NAD(+) from nicotinate D-ribonucleotide: step 1/1. Catalyzes the reversible adenylation of nicotinate mononucleotide (NaMN) to nicotinic acid adenine dinucleotide (NaAD). The polypeptide is Probable nicotinate-nucleotide adenylyltransferase (Coxiella burnetii (strain RSA 331 / Henzerling II)).